The following is a 175-amino-acid chain: Large ribosomal subunit protein mL67 (175 aa).

This sequence belongs to the mitochondrion-specific ribosomal protein mL67 family. In terms of assembly, component of the mitochondrial large ribosomal subunit (mt-LSU). Mature yeast 74S mitochondrial ribosomes consist of a small (37S) and a large (54S) subunit. The 37S small subunit contains a 15S ribosomal RNA (15S mt-rRNA) and at least 32 different proteins. The 54S large subunit contains a 21S rRNA (21S mt-rRNA) and at least 45 different proteins.

The protein resides in the mitochondrion. Component of the mitochondrial ribosome (mitoribosome), a dedicated translation machinery responsible for the synthesis of mitochondrial genome-encoded proteins, including at least some of the essential transmembrane subunits of the mitochondrial respiratory chain. The mitoribosomes are attached to the mitochondrial inner membrane and translation products are cotranslationally integrated into the membrane. mL67/mhr1 also has extraribosomal functions, being involved in regulation of mitochondrial DNA recombination, maintenance and repair, and generation of homoplasmic cells. mL67/mhr1 also acts as transcription factor involved in regulation of RNA polymerase II-dependent transcription. In Schizosaccharomyces pombe (strain 972 / ATCC 24843) (Fission yeast), this protein is Large ribosomal subunit protein mL67 (mhr1).